Consider the following 1682-residue polypeptide: Sodium channel protein type 7 subunit alpha (1682 aa).

Residues 1 to 117 (MLASPEPKGL…RRTTIKVLVH (117 aa)) lie on the Cytoplasmic side of the membrane. Residues 100-401 (TLSPFNCIRR…ILAMAYEEEK (302 aa)) form an I repeat. A helical transmembrane segment spans residues 118–137 (PFFQLFILISVLIDCVFMSL). Over 138–141 (TNLP) the chain is Extracellular. A helical membrane pass occupies residues 142–167 (KWRPVLENTLLGIYTFEILVKLFARG). Residues 168–178 (VWAGSFSFLGD) are Cytoplasmic-facing. Residues 179-196 (PWNWLDFSVTVFEVIIRY) traverse the membrane as a helical segment. The Extracellular portion of the chain corresponds to 197–200 (SPLD). Residues 201–219 (FIPTLQTARTLRILKIIPL) form a helical membrane-spanning segment. The Cytoplasmic segment spans residues 220–237 (NQGLKSLVGVLIHCLKQL). Residues 238-259 (IGVIILTLFFLSIFSLIGMGLF) traverse the membrane as a helical segment. Over 260-338 (MGNLKHKCFR…PDQGFTNFDS (79 aa)) the chain is Extracellular. Cysteines 267 and 307 form a disulfide. N-linked (GlcNAc...) asparagine glycans are attached at residues N276, N281, and N309. Residues 339–366 (FGWALFALFRLMAQDYPEVLYHQILYAS) constitute an intramembrane region (pore-forming). A topological domain (extracellular) is located at residue G367. A helical membrane pass occupies residues 368–407 (KVYMIFFVVVSFLFSFYMASLFLGILAMAYEEEKQRVGEI). The Cytoplasmic portion of the chain corresponds to 408 to 505 (SKKIEPKFQQ…EFVHRIIMAP (98 aa)). S442 is modified (phosphoserine; by PKA). The stretch at 487 to 758 (CSPCWLKLKE…QLAVARIKKG (272 aa)) is one II repeat. Residues 506–521 (FTDLFLIICIILNVCF) form a helical membrane-spanning segment. Residues 522–530 (LTLEHYPMS) are Extracellular-facing. A helical membrane pass occupies residues 531 to 559 (KQTNTLLNIGNLVFIGIFTAEMIFKIIAM). The Cytoplasmic portion of the chain corresponds to 560-568 (HPYGYFQVG). Residues 569 to 586 (WNIFDSMIVFHGLIELCL) form a helical membrane-spanning segment. Residues 587 to 592 (ANVAGM) are Extracellular-facing. A helical transmembrane segment spans residues 593 to 609 (ALLRLFRMLRIFKLGKY). Residues 610–626 (WPTFQILMWSLSNSWVA) are Cytoplasmic-facing. A helical transmembrane segment spans residues 627-655 (LKDLVLLLFTFIFFSAAFGMKLFGKNYEE). The Extracellular portion of the chain corresponds to 656–673 (FVCHIDKDCQLPRWHMHD). 2 disulfide bridges follow: C658–C664 and C696–C705. The pore-forming intramembrane region spans 674-700 (FFHSFLNVFRILCGEWVETLWDCMEVA). Position 701 (G701) is a topological domain, extracellular. A helical transmembrane segment spans residues 702–732 (QSWCIPFYLMVILIGNLLVLYLFLALVSSFS). Residues 733–934 (SCKDVTAEEN…KTCCKIVENN (202 aa)) lie on the Cytoplasmic side of the membrane. Phosphothreonine; by PKA is present on T777. The tract at residues 801 to 871 (TQDFLKDKEK…SKEKIKQSSS (71 aa)) is disordered. Residues 804-819 (FLKDKEKSSGTEKNAT) show a composition bias toward basic and acidic residues. Positions 820-834 (ENESQSLIPSPSVSE) are enriched in polar residues. S843 carries the post-translational modification Phosphoserine. Residues S869 and S905 each carry the phosphoserine; by PKA modification. One copy of the III repeat lies at 916 to 1224 (KGKIWQNIRK…RKQYRRLKKL (309 aa)). Residues 935–953 (WFKCFIGLVTLLSTGTLAF) traverse the membrane as a helical segment. The Extracellular segment spans residues 954-961 (EDIYMDQR). The chain crosses the membrane as a helical span at residues 962–990 (KTIKILLEYADMIFTYIFILEMLLKWMAY). The Cytoplasmic portion of the chain corresponds to 991 to 998 (GFKAYFSN). The chain crosses the membrane as a helical span at residues 999–1020 (GWYRLDFVVVIVFCLSLIGKTR). A topological domain (extracellular) is located at residue E1021. A helical membrane pass occupies residues 1022–1040 (ELKPLISMKFLRPLRVLSQ). Topologically, residues 1041–1055 (FERMKVVVRALIKTT) are cytoplasmic. Residues 1056–1080 (LPTLNVFLVCLMIWLIFSIMGVDLF) traverse the membrane as a helical segment. The Extracellular segment spans residues 1081 to 1127 (AGRFYECIDPTSGERFPSSEVMNKSRCESLLFNESMLWENAKMNFDN). Residues C1087 and C1107 are joined by a disulfide bond. N1103 and N1113 each carry an N-linked (GlcNAc...) asparagine glycan. Positions 1128–1154 (VGNGFLSLLQVATFNGWITIMNSAIDS) form an intramembrane region, pore-forming. Over 1155–1167 (VAVNIQPHFEVNI) the chain is Extracellular. The helical transmembrane segment at 1168-1202 (YMYCYFINFIIFGVFLPLSMLITVIIDNFNKHKIK) threads the bilayer. Residues 1203–1250 (LGGSNIFITVKQRKQYRRLKKLMYEDSQRPVPRPLNKLQGFIFDVVTS) lie on the Cytoplasmic side of the membrane. The IV repeat unit spans residues 1233–1531 (VPRPLNKLQG…WKRFDPDRTQ (299 aa)). The chain crosses the membrane as a helical span at residues 1251–1272 (QAFNVIVMVLICFQAIAMMIDT). At 1273–1276 (DVQS) the chain is on the extracellular side. The helical transmembrane segment at 1277–1305 (LQMSIALYWINSIFVMLYTMECILKLIAF) threads the bilayer. Residues 1306–1312 (RCFYFTI) are Cytoplasmic-facing. Residues 1313 to 1338 (AWNIFDFMVVIFSITGLCLPMTVGSY) form a helical membrane-spanning segment. Topologically, residues 1339 to 1341 (LVP) are extracellular. The helical transmembrane segment at 1342-1362 (PSLVQLILLSRIIHMLRLGKG) threads the bilayer. Residues 1363 to 1377 (PKVFHNLMLPLMLSL) are Cytoplasmic-facing. The helical transmembrane segment at 1378-1402 (PALLNIILLIFLVMFIYAVFGMYNF) threads the bilayer. Topologically, residues 1403–1420 (AYVKKEAGINDVSNFETF) are extracellular. An intramembrane region (pore-forming) is located at residues 1421 to 1444 (GNSMLCLFQVAIFAGWDGMLDAIF). Residues 1445 to 1468 (NSKWSDCDPDKINPGTQVRGDCGN) are Extracellular-facing. C1451 and C1466 are disulfide-bonded. A helical membrane pass occupies residues 1469-1504 (PSVGIFYFVSYILISWLIIVNMYIVVVMEFLNIASK). Topologically, residues 1505–1682 (KKNKTLSEDD…KEKSPIQSQI (178 aa)) are cytoplasmic.

Belongs to the sodium channel (TC 1.A.1.10) family. SCN7A subfamily. In terms of assembly, the sodium channel formed by SCN7A is probably a heterooligomeric complex consisting of the ion conducting pore forming alpha subunit SCN7A and regulatory beta subunits such as SCN3B. Interacts with ATP1A1; activates ATP1A1 and thereby indirectly signals to nearby neurons to regulate sodium homeostasis. Heart and uterus.

The protein resides in the cell membrane. It carries out the reaction Na(+)(in) = Na(+)(out). Functionally, sodium leak channel functioning as an osmosensor regulating sodium ion levels in various tissues and organs. While most sodium channels are voltage-gated, SCN7A is not and lets sodium flow through membrane along its concentration gradient. In glial cells of the central nervous system, senses body-fluid sodium levels and controls salt intake behavior as well as voluntary water intake through activation of nearby neurons to maintain appropriate sodium levels in the body. By mediating sodium influx into keratinocytes, also plays a role in skin barrier homeostasis. This is Sodium channel protein type 7 subunit alpha from Homo sapiens (Human).